Reading from the N-terminus, the 154-residue chain is 6,7-dimethyl-8-ribityllumazine synthase (154 aa).

5-amino-6-(D-ribitylamino)uracil is bound by residues F26, 60-62 (ALE), and 84-86 (CII). 89–90 (ET) is a binding site for (2S)-2-hydroxy-3-oxobutyl phosphate. H92 functions as the Proton donor in the catalytic mechanism. N117 contacts 5-amino-6-(D-ribitylamino)uracil. R131 provides a ligand contact to (2S)-2-hydroxy-3-oxobutyl phosphate.

It belongs to the DMRL synthase family.

It carries out the reaction (2S)-2-hydroxy-3-oxobutyl phosphate + 5-amino-6-(D-ribitylamino)uracil = 6,7-dimethyl-8-(1-D-ribityl)lumazine + phosphate + 2 H2O + H(+). It participates in cofactor biosynthesis; riboflavin biosynthesis; riboflavin from 2-hydroxy-3-oxobutyl phosphate and 5-amino-6-(D-ribitylamino)uracil: step 1/2. Functionally, catalyzes the formation of 6,7-dimethyl-8-ribityllumazine by condensation of 5-amino-6-(D-ribitylamino)uracil with 3,4-dihydroxy-2-butanone 4-phosphate. This is the penultimate step in the biosynthesis of riboflavin. In Paracidovorax citrulli (strain AAC00-1) (Acidovorax citrulli), this protein is 6,7-dimethyl-8-ribityllumazine synthase.